Consider the following 1607-residue polypeptide: Abnormal cell migration protein 38 (1607 aa).

12 disordered regions span residues 14-52 (EFNKRADSPRAAGNYDFESGNIDNIPLNDDGPLSPSQDF), 67-93 (RLSPNGGLNREDQQPGPSGNNDGQYHV), 167-222 (STSY…AAQA), 326-425 (GSSA…PPSQ), 459-478 (SPNTNGPSSQLQRPQSGMDQ), 549-594 (MVHR…QHSY), 845-931 (YDEN…PETE), 1017-1061 (SVQV…DYDM), 1141-1241 (EPSP…VTPK), 1319-1378 (ETPN…KGQL), 1392-1445 (FANV…PQAV), and 1517-1607 (KVKT…STDP). 2 stretches are compositionally biased toward polar residues: residues 81–93 (PGPSGNNDGQYHV) and 179–191 (PSGNSSSQINHQQ). A compositionally biased stretch (low complexity) spans 195–205 (VPQVQQQPAKP). Residues 206-218 (KTTKKRPPPKKKT) are compositionally biased toward basic residues. A compositionally biased stretch (low complexity) spans 327–341 (SSASSSAQPSQPAKK). 2 stretches are compositionally biased toward polar residues: residues 349-371 (VPNTAKNLAQNQQIMPPQAQITP) and 379-425 (PTTT…PPSQ). The span at 585–594 (NSHSQSQHSY) shows a compositional bias: low complexity. A compositionally biased stretch (acidic residues) spans 858-871 (EEPESESESEPEAE). Composition is skewed to basic and acidic residues over residues 872–886 (PEPKKDNFAEPEPAR) and 907–917 (YRNESESTFDW). Composition is skewed to low complexity over residues 1333–1354 (PNIPSTSTSIPPASTVVSSVSV), 1395–1419 (VPSSKPSTSSAVSATPSTSSAVSAK), and 1584–1601 (LLGTSNMNSSTNGSSSGL).

In terms of tissue distribution, expressed in gonad distal tip cells and gonad sheath cells.

It localises to the nucleus. It is found in the cytoplasm. In terms of biological role, during gonad development, involved in distal tip cell (DTC) migration from the dorsal side of the hermaphrodite body to the midbody which allows for the formation of gonad arms. Role in gonad DTC migration may be in association with integrin related proteins ina-1 and mig-15. In Caenorhabditis elegans, this protein is Abnormal cell migration protein 38.